The primary structure comprises 301 residues: uncharacterized protein (301 aa).

The N-terminal stretch at 1–28 is a signal peptide; that stretch reads MFFREDKSVAFRLRSAALSGCATGQSDA.

This is an uncharacterized protein from Treponema pallidum (strain Nichols).